We begin with the raw amino-acid sequence, 350 residues long: Hydroxymethylglutaryl-CoA synthase (350 aa).

Glu-83 acts as the Proton donor/acceptor in catalysis. Cys-115 serves as the catalytic Acyl-thioester intermediate. (3S)-3-hydroxy-3-methylglutaryl-CoA is bound by residues Cys-115 and Thr-156. Arg-204 contributes to the CoA binding site. 2 residues coordinate (3S)-3-hydroxy-3-methylglutaryl-CoA: Thr-206 and His-239. Catalysis depends on His-239, which acts as the Proton donor/acceptor. CoA is bound at residue Lys-244. 2 residues coordinate (3S)-3-hydroxy-3-methylglutaryl-CoA: Asn-271 and Ser-301.

The protein belongs to the thiolase-like superfamily. Archaeal HMG-CoA synthase family. In terms of assembly, interacts with acetoacetyl-CoA thiolase that catalyzes the precedent step in the pathway and with a DUF35 protein. The acetoacetyl-CoA thiolase/HMG-CoA synthase complex channels the intermediate via a fused CoA-binding site, which allows for efficient coupling of the endergonic thiolase reaction with the exergonic HMGCS reaction.

It carries out the reaction acetoacetyl-CoA + acetyl-CoA + H2O = (3S)-3-hydroxy-3-methylglutaryl-CoA + CoA + H(+). The protein operates within metabolic intermediate biosynthesis; (R)-mevalonate biosynthesis; (R)-mevalonate from acetyl-CoA: step 2/3. Its function is as follows. Catalyzes the condensation of acetyl-CoA with acetoacetyl-CoA to form 3-hydroxy-3-methylglutaryl-CoA (HMG-CoA). Functions in the mevalonate (MVA) pathway leading to isopentenyl diphosphate (IPP), a key precursor for the biosynthesis of isoprenoid compounds that are building blocks of archaeal membrane lipids. The sequence is that of Hydroxymethylglutaryl-CoA synthase from Thermococcus gammatolerans (strain DSM 15229 / JCM 11827 / EJ3).